The primary structure comprises 638 residues: Chaperone protein DnaK (638 aa).

The residue at position 199 (T199) is a Phosphothreonine; by autocatalysis. Residues 600-638 (EINQKKSEENLKKEDTSSESKKDENVVDAEFEEIKDPKK) form a disordered region. Residues 602 to 624 (NQKKSEENLKKEDTSSESKKDEN) show a composition bias toward basic and acidic residues.

Belongs to the heat shock protein 70 family.

Its function is as follows. Acts as a chaperone. In Buchnera aphidicola subsp. Schizaphis graminum (strain Sg), this protein is Chaperone protein DnaK.